A 140-amino-acid chain; its full sequence is Endoribonuclease YbeY (140 aa).

The Zn(2+) site is built by histidine 105, histidine 109, and aspartate 115.

Belongs to the endoribonuclease YbeY family. Requires Zn(2+) as cofactor.

It localises to the cytoplasm. Its function is as follows. Single strand-specific metallo-endoribonuclease involved in late-stage 70S ribosome quality control and in maturation of the 3' terminus of the 16S rRNA. This Flavobacterium psychrophilum (strain ATCC 49511 / DSM 21280 / CIP 103535 / JIP02/86) protein is Endoribonuclease YbeY.